The primary structure comprises 688 residues: Complement C1s-1 subcomponent (688 aa).

Residues 1 to 15 (MWCLVLFSLLASFSA) form the signal peptide. Residues 16-130 (EPTMHGEILS…TGFAAYYTAI (115 aa)) enclose the CUB 1 domain. The Ca(2+) site is built by E60, D68, D113, D131, I132, and E134. The cysteines at positions 65 and 83 are disulfide-linked. The EGF-like; calcium-binding domain maps to 131-172 (DINECTDFTDVPCSHFCNNFIGGYFCSCPPEYFLHDDMRNCG). 3 disulfides stabilise this stretch: C135-C147, C143-C156, and C158-C171. N149, F150, and G153 together coordinate Ca(2+). N149 carries the (3R)-3-hydroxyasparagine modification. An N-linked (GlcNAc...) asparagine glycan is attached at N174. A disulfide bond links C175 and C202. Residues 175-290 (CSGDVFTALI…KGWKLRYHGD (116 aa)) form the CUB 2 domain. Ca(2+) is bound by residues E226, D236, D275, G278, and Q279. C234 and C251 are oxidised to a cystine. Sushi domains are found at residues 292 to 356 (ISCA…KCQP) and 357 to 423 (VYCG…RCIP). Cystine bridges form between C294–C341, C321–C354, C359–C403, C386–C421, C425–C549, C595–C618, and C627–C659. In terms of domain architecture, Peptidase S1 spans 438–680 (IFGGQPAKIE…YVDWILKTMQ (243 aa)). Residues H475 and D529 each act as charge relay system in the active site. Residue S631 is the Charge relay system of the active site. A glycan (N-linked (GlcNAc...) asparagine) is linked at N641.

Belongs to the peptidase S1 family. Core component of the complement C1 complex, a calcium-dependent complex composed of 1 molecule of the C1Q subcomplex, 2 molecules of C1R and 2 molecules of C1S. The C1Q subcomplex is composed 18 subunits: 3 chains of C1QA, C1QB, and C1QC trimerize to form 6 collagen-like triple helices connected to six globular ligand-recognition modules. Cleaved and activated by C1R to generate Complement C1s subcomponent heavy and light chains. In terms of processing, the iron and 2-oxoglutarate dependent 3-hydroxylation of aspartate and asparagine is (R) stereospecific within EGF domains. As to expression, predominantly expressed in liver.

Its subcellular location is the secreted. The protein resides in the cell surface. The enzyme catalyses Cleavage of Arg-|-Ala bond in complement component C4 to form C4a and C4b, and Lys(or Arg)-|-Lys bond in complement component C2 to form C2a and C2b: the 'classical' pathway C3 convertase.. Cleaved and activated by C1R. Immunoglobulin-binding promotes autoactivation of C1R, which results in the cleavage of the Arg-Ile bond in the catalytic domain. Inhibited by C1 inhibitor (SERPING1). Component of the complement C1 complex, a multiprotein complex that initiates the classical pathway of the complement system, a cascade of proteins that leads to phagocytosis and breakdown of pathogens and signaling that strengthens the adaptive immune system. C1S is activated following association of the C1 complex with immunoglobulins (IgG or IgM) complexed with antigens to form antigen-antibody complexes on the surface of pathogens. C1S is cleaved and activated by C1R to generate C1s subcomponent heavy and light chains. C1s subcomponent light chain then cleaves and activates C2 and C4, the next components of the classical complement pathway. Its function is as follows. Serine protease component of the complement C1 complex, which catalyzes cleavage and activation of C2 and C4, the next components of the classical complement pathway. Also cleaves IGFBP5 and thereby inhibits the trophic effects of IGF1. This Mus musculus (Mouse) protein is Complement C1s-1 subcomponent.